The following is a 145-amino-acid chain: Transcription antitermination protein NusB (145 aa).

This sequence belongs to the NusB family.

In terms of biological role, involved in transcription antitermination. Required for transcription of ribosomal RNA (rRNA) genes. Binds specifically to the boxA antiterminator sequence of the ribosomal RNA (rrn) operons. This chain is Transcription antitermination protein NusB, found in Aromatoleum aromaticum (strain DSM 19018 / LMG 30748 / EbN1) (Azoarcus sp. (strain EbN1)).